The sequence spans 59 residues: Large ribosomal subunit protein uL30 (59 aa).

It belongs to the universal ribosomal protein uL30 family. Part of the 50S ribosomal subunit.

The polypeptide is Large ribosomal subunit protein uL30 (Ectopseudomonas mendocina (strain ymp) (Pseudomonas mendocina)).